The sequence spans 429 residues: Hydrogenobyrinate a,c-diamide synthase (429 aa).

The 190-residue stretch at 240–429 (RTAVARDVAF…SFMHLIDFSE (190 aa)) folds into the GATase cobBQ-type domain. Cysteine 323 serves as the catalytic Nucleophile.

The protein belongs to the CobB/CbiA family. Mg(2+) is required as a cofactor.

The catalysed reaction is hydrogenobyrinate + 2 L-glutamine + 2 ATP + 2 H2O = hydrogenobyrinate a,c-diamide + 2 L-glutamate + 2 ADP + 2 phosphate + 2 H(+). Its pathway is cofactor biosynthesis; adenosylcobalamin biosynthesis; cob(II)yrinate a,c-diamide from precorrin-2 (aerobic route): step 9/10. Its function is as follows. Catalyzes the ATP-dependent amidation of the two carboxylate groups at positions a and c of hydrogenobyrinate, using either L-glutamine or ammonia as the nitrogen source. The polypeptide is Hydrogenobyrinate a,c-diamide synthase (Rhizobium meliloti (strain 1021) (Ensifer meliloti)).